A 164-amino-acid chain; its full sequence is Small ribosomal subunit protein uS5 (164 aa).

One can recognise an S5 DRBM domain in the interval 10–73; it reads LEERVVAVNR…DDAKKNLIEV (64 aa).

Belongs to the universal ribosomal protein uS5 family. Part of the 30S ribosomal subunit. Contacts proteins S4 and S8.

Its function is as follows. With S4 and S12 plays an important role in translational accuracy. Located at the back of the 30S subunit body where it stabilizes the conformation of the head with respect to the body. In Streptococcus pneumoniae serotype 2 (strain D39 / NCTC 7466), this protein is Small ribosomal subunit protein uS5.